The chain runs to 424 residues: Adenylosuccinate synthetase 1 (424 aa).

Residues 12–18 (GDEGKGK) and 40–42 (GHT) each bind GTP. Catalysis depends on aspartate 13, which acts as the Proton acceptor. The Mg(2+) site is built by aspartate 13 and glycine 40. Residues 13–16 (DEGK), 38–41 (NAGH), threonine 127, arginine 141, threonine 236, and arginine 304 contribute to the IMP site. Histidine 41 functions as the Proton donor in the catalytic mechanism. 300–306 (ARTGRPR) lines the substrate pocket. GTP-binding positions include arginine 306, 332 to 334 (KLD), and 413 to 415 (GVG).

The protein belongs to the adenylosuccinate synthetase family. Homodimer. It depends on Mg(2+) as a cofactor.

It is found in the cytoplasm. It catalyses the reaction IMP + L-aspartate + GTP = N(6)-(1,2-dicarboxyethyl)-AMP + GDP + phosphate + 2 H(+). It functions in the pathway purine metabolism; AMP biosynthesis via de novo pathway; AMP from IMP: step 1/2. Its function is as follows. Plays an important role in the de novo pathway of purine nucleotide biosynthesis. Catalyzes the first committed step in the biosynthesis of AMP from IMP. This chain is Adenylosuccinate synthetase 1, found in Methanosarcina acetivorans (strain ATCC 35395 / DSM 2834 / JCM 12185 / C2A).